A 140-amino-acid chain; its full sequence is Sex-regulated protein janus-B (140 aa).

Arg-42 contacts substrate. His-69 acts as the Proton acceptor in catalysis. 110–112 lines the substrate pocket; that stretch reads SRT.

It belongs to the janus family.

Functionally, janA and janB regulate somatic sex differentiation. The sequence is that of Sex-regulated protein janus-B (janB) from Drosophila yakuba (Fruit fly).